Here is a 320-residue protein sequence, read N- to C-terminus: o-succinylbenzoate synthase (320 aa).

K133 acts as the Proton donor in catalysis. Mg(2+)-binding residues include D161, E190, and D213. The active-site Proton acceptor is K235.

This sequence belongs to the mandelate racemase/muconate lactonizing enzyme family. MenC type 1 subfamily. Requires a divalent metal cation as cofactor.

It catalyses the reaction (1R,6R)-6-hydroxy-2-succinyl-cyclohexa-2,4-diene-1-carboxylate = 2-succinylbenzoate + H2O. It participates in quinol/quinone metabolism; 1,4-dihydroxy-2-naphthoate biosynthesis; 1,4-dihydroxy-2-naphthoate from chorismate: step 4/7. It functions in the pathway quinol/quinone metabolism; menaquinone biosynthesis. Functionally, converts 2-succinyl-6-hydroxy-2,4-cyclohexadiene-1-carboxylate (SHCHC) to 2-succinylbenzoate (OSB). The chain is o-succinylbenzoate synthase from Salmonella paratyphi B (strain ATCC BAA-1250 / SPB7).